A 204-amino-acid polypeptide reads, in one-letter code: Holliday junction branch migration complex subunit RuvA (204 aa).

The segment at M1–C64 is domain I. The domain II stretch occupies residues T65 to F143. The segment at I144–S154 is flexible linker. The tract at residues S154 to M204 is domain III.

It belongs to the RuvA family. As to quaternary structure, homotetramer. Forms an RuvA(8)-RuvB(12)-Holliday junction (HJ) complex. HJ DNA is sandwiched between 2 RuvA tetramers; dsDNA enters through RuvA and exits via RuvB. An RuvB hexamer assembles on each DNA strand where it exits the tetramer. Each RuvB hexamer is contacted by two RuvA subunits (via domain III) on 2 adjacent RuvB subunits; this complex drives branch migration. In the full resolvosome a probable DNA-RuvA(4)-RuvB(12)-RuvC(2) complex forms which resolves the HJ.

The protein localises to the cytoplasm. The RuvA-RuvB-RuvC complex processes Holliday junction (HJ) DNA during genetic recombination and DNA repair, while the RuvA-RuvB complex plays an important role in the rescue of blocked DNA replication forks via replication fork reversal (RFR). RuvA specifically binds to HJ cruciform DNA, conferring on it an open structure. The RuvB hexamer acts as an ATP-dependent pump, pulling dsDNA into and through the RuvAB complex. HJ branch migration allows RuvC to scan DNA until it finds its consensus sequence, where it cleaves and resolves the cruciform DNA. The protein is Holliday junction branch migration complex subunit RuvA of Syntrophus aciditrophicus (strain SB).